The following is a 101-amino-acid chain: 2-amino-4-ketopentanoate thiolase alpha subunit (101 aa).

The protein belongs to the OrtA family. As to quaternary structure, heterodimer with OrtB.

The catalysed reaction is D-alanine + acetyl-CoA = (2R)-2-amino-4-oxopentanoate + CoA. Its function is as follows. Involved in the ornithine fermentation pathway. Catalyzes the thiolytic cleavage of 2-amino-4-ketopentanoate (AKP) with coenzyme A (CoA) to form acetyl-CoA and alanine. It is strictly specific for AKP. This is 2-amino-4-ketopentanoate thiolase alpha subunit from Unknown prokaryotic organism.